The following is a 100-amino-acid chain: Large ribosomal subunit protein uL23 (100 aa).

This sequence belongs to the universal ribosomal protein uL23 family. In terms of assembly, part of the 50S ribosomal subunit. Contacts protein L29, and trigger factor when it is bound to the ribosome.

Functionally, one of the early assembly proteins it binds 23S rRNA. One of the proteins that surrounds the polypeptide exit tunnel on the outside of the ribosome. Forms the main docking site for trigger factor binding to the ribosome. In Buchnera aphidicola subsp. Baizongia pistaciae (strain Bp), this protein is Large ribosomal subunit protein uL23.